The chain runs to 295 residues: Protease HtpX (295 aa).

2 helical membrane passes run 4-24 (ILLF…TLSL) and 41-61 (GQLL…SLFI). Position 147 (H147) interacts with Zn(2+). The active site involves E148. Residue H151 coordinates Zn(2+). Transmembrane regions (helical) follow at residues 158 to 178 (VTMA…ARII) and 198 to 218 (FVAT…IVMW). E224 serves as a coordination point for Zn(2+).

The protein belongs to the peptidase M48B family. The cofactor is Zn(2+).

The protein localises to the cell inner membrane. The chain is Protease HtpX from Pseudomonas entomophila (strain L48).